A 481-amino-acid polypeptide reads, in one-letter code: Aspartyl/glutamyl-tRNA(Asn/Gln) amidotransferase subunit B (481 aa).

It belongs to the GatB/GatE family. GatB subfamily. Heterotrimer of A, B and C subunits.

The catalysed reaction is L-glutamyl-tRNA(Gln) + L-glutamine + ATP + H2O = L-glutaminyl-tRNA(Gln) + L-glutamate + ADP + phosphate + H(+). It carries out the reaction L-aspartyl-tRNA(Asn) + L-glutamine + ATP + H2O = L-asparaginyl-tRNA(Asn) + L-glutamate + ADP + phosphate + 2 H(+). Its function is as follows. Allows the formation of correctly charged Asn-tRNA(Asn) or Gln-tRNA(Gln) through the transamidation of misacylated Asp-tRNA(Asn) or Glu-tRNA(Gln) in organisms which lack either or both of asparaginyl-tRNA or glutaminyl-tRNA synthetases. The reaction takes place in the presence of glutamine and ATP through an activated phospho-Asp-tRNA(Asn) or phospho-Glu-tRNA(Gln). The protein is Aspartyl/glutamyl-tRNA(Asn/Gln) amidotransferase subunit B of Pseudomonas entomophila (strain L48).